Consider the following 63-residue polypeptide: Beta-defensin 4 (63 aa).

A signal peptide spans 1–22 (MRIHYLLFTFLLVLLSPLAAFT). Gln23 carries the post-translational modification Pyrrolidone carboxylic acid. 3 cysteine pairs are disulfide-bonded: Cys31/Cys59, Cys38/Cys52, and Cys42/Cys60.

It belongs to the beta-defensin family. In terms of tissue distribution, tongue, esophagus and trachea.

The protein localises to the secreted. Its function is as follows. Exhibits antimicrobial activity against Gram-negative bacteria and Gram-positive bacteria. May act as a ligand for C-C chemokine receptor CCR6. Can bind to mouse (but not human) CCR6 and induce chemotactic activity of CCR6-expressing cells. The chain is Beta-defensin 4 (Defb4) from Mus musculus (Mouse).